A 326-amino-acid polypeptide reads, in one-letter code: Tryptophan--tRNA ligase (326 aa).

ATP is bound by residues 11 to 13 (QPT) and 19 to 20 (GN). The short motif at 12-20 (PTGQIHLGN) is the 'HIGH' region element. Residue Asp135 participates in L-tryptophan binding. ATP-binding positions include 147–149 (GED), Val186, and 195–199 (KMSKS). The short motif at 195-199 (KMSKS) is the 'KMSKS' region element.

The protein belongs to the class-I aminoacyl-tRNA synthetase family. Homodimer.

The protein resides in the cytoplasm. It catalyses the reaction tRNA(Trp) + L-tryptophan + ATP = L-tryptophyl-tRNA(Trp) + AMP + diphosphate + H(+). Catalyzes the attachment of tryptophan to tRNA(Trp). This chain is Tryptophan--tRNA ligase, found in Helicobacter pylori (strain ATCC 700392 / 26695) (Campylobacter pylori).